The sequence spans 33 residues: Putative makorin-5 (33 aa).

The polypeptide is Putative makorin-5 (MKRN9P) (Homo sapiens (Human)).